Consider the following 304-residue polypeptide: Recombination-associated protein RdgC (304 aa).

This sequence belongs to the RdgC family.

The protein localises to the cytoplasm. The protein resides in the nucleoid. May be involved in recombination. This chain is Recombination-associated protein RdgC, found in Shewanella baltica (strain OS195).